Consider the following 174-residue polypeptide: 5-hydroxymethyl-dUMP N-hydrolase (174 aa).

The residue at position 2 (alanine 2) is an N-acetylalanine. Residue glycine 27 coordinates 5-hydroxymethyl-dUMP. Serine 28 carries the post-translational modification Phosphoserine. Isoleucine 29, arginine 30, glycine 31, serine 98, glycine 100, and glutamate 104 together coordinate 5-hydroxymethyl-dUMP. Position 98 is a phosphoserine (serine 98). Serine 123, serine 128, serine 138, and serine 169 each carry phosphoserine. Serine 128 contributes to the 5-hydroxymethyl-dUMP binding site.

The protein belongs to the 2'-deoxynucleoside 5'-phosphate N-hydrolase 1 family. Monomer and homodimer. Expressed at low levels in brain, colon, lung, peripheral blood leukocytes, placenta, small intestine, and thymus. Expressed at high levels in heart, kidney, liver, skeletal muscle and spleen. Overexpressed in a significant proportion of breast cancers.

The protein localises to the cytoplasm. Its subcellular location is the nucleus. The catalysed reaction is 5-hydroxymethyl-dUMP + H2O = 5-hydroxymethyluracil + 2-deoxy-D-ribose 5-phosphate. With respect to regulation, inhibited by AMP and GMP. In terms of biological role, part of a nucleotide salvage pathway that eliminates epigenetically modified 5-hydroxymethyl-dCMP (hmdCMP) in a two-step process entailing deamination to cytotoxic 5-hydroxymethyl-dUMP (hmdUMP), followed by its hydrolysis into 5-hydroxymethyluracil (hmU) and 2-deoxy-D-ribose 5-phosphate (deoxyribosephosphate). Catalyzes the second step in that pathway, the hydrolysis of the N-glycosidic bond in hmdUMP, degrading this cytotoxic nucleotide to avoid its genomic integration. The protein is 5-hydroxymethyl-dUMP N-hydrolase of Homo sapiens (Human).